The chain runs to 394 residues: MVGTTSSLDEIRKAQRADGPAGILAIGTANPANHVLQAEYPDYYFRITNSEHMTDLKEKFKRMCDKSTIRKRHMHLTEEFLKENPNMCAYMAPSLDARQDIVVVEVPKLGKEAAVKAIKEWGQPKSKITHVVFCTTSGVDMPGADYQLTKLLGLRPSVKRLMMYQQGCFAGGTVLRLAKDLAENNRGARVLVVCSEITAVTFRGPSDTHLDSLVGQALFSDGAAALIVGSDPDVSAGEKPIFEMVSAAQTILPDSDGAIDGHLREVGITFHLLKDVPGLISKNIEKSLDEAFKPLGISDWNSLFWIAHPGGPAILDDVEKKLGLKAEKMRATRHVLSEYGNMSSACVLFILDEMRRKSLDDGVATTGEGLEWGVLFGFGPGLTVETVVLHSVPV.

The active site involves Cys-168.

This sequence belongs to the thiolase-like superfamily. Chalcone/stilbene synthases family.

It catalyses the reaction (E)-4-coumaroyl-CoA + 3 malonyl-CoA + 3 H(+) = 2',4,4',6'-tetrahydroxychalcone + 3 CO2 + 4 CoA. It functions in the pathway secondary metabolite biosynthesis; flavonoid biosynthesis. In terms of biological role, the primary product of this enzyme is 4,2',4',6'-tetrahydroxychalcone (also termed naringenin-chalcone or chalcone) which can under specific conditions spontaneously isomerize into naringenin. The protein is Chalcone synthase (CHS) of Raphanus sativus (Radish).